The chain runs to 175 residues: ATP synthase subunit b, chloroplastic (175 aa).

The chain crosses the membrane as a helical span at residues 24-46 (VLNLAVVLAIVLTYVGDALRGLL).

Belongs to the ATPase B chain family. As to quaternary structure, F-type ATPases have 2 components, F(1) - the catalytic core - and F(0) - the membrane proton channel. F(1) has five subunits: alpha(3), beta(3), gamma(1), delta(1), epsilon(1). F(0) has four main subunits: a(1), b(1), b'(1) and c(10-14). The alpha and beta chains form an alternating ring which encloses part of the gamma chain. F(1) is attached to F(0) by a central stalk formed by the gamma and epsilon chains, while a peripheral stalk is formed by the delta, b and b' chains.

Its subcellular location is the plastid. The protein resides in the chloroplast thylakoid membrane. In terms of biological role, f(1)F(0) ATP synthase produces ATP from ADP in the presence of a proton or sodium gradient. F-type ATPases consist of two structural domains, F(1) containing the extramembraneous catalytic core and F(0) containing the membrane proton channel, linked together by a central stalk and a peripheral stalk. During catalysis, ATP synthesis in the catalytic domain of F(1) is coupled via a rotary mechanism of the central stalk subunits to proton translocation. Functionally, component of the F(0) channel, it forms part of the peripheral stalk, linking F(1) to F(0). The protein is ATP synthase subunit b, chloroplastic of Chlorella vulgaris (Green alga).